The following is a 364-amino-acid chain: Thebaine 6-O-demethylase (364 aa).

Positions 214 to 314 (GTQAMRMNYY…RLSIATFHDP (101 aa)) constitute a Fe2OG dioxygenase domain. Tyrosine 223 contacts 2-oxoglutarate. Residues histidine 238, aspartate 240, and histidine 295 each coordinate Fe cation. 2-oxoglutarate is bound by residues arginine 305 and serine 307.

Belongs to the iron/ascorbate-dependent oxidoreductase family. Requires L-ascorbate as cofactor. It depends on Fe cation as a cofactor. Mainly expressed in stems and leaves and, to a lower extent, in capsules and roots.

It catalyses the reaction thebaine + 2-oxoglutarate + O2 = neopinone + formaldehyde + succinate + CO2. The catalysed reaction is oripavine + 2-oxoglutarate + O2 = neomorphinone + formaldehyde + succinate + CO2. The enzyme catalyses (S)-canadine + S-adenosyl-L-methionine = (S)-cis-N-methylcanadine + S-adenosyl-L-homocysteine. It carries out the reaction thebaine + 2-oxoglutarate + O2 = 6-O-demethylthebaine + formaldehyde + succinate + CO2 + H(+). Its pathway is alkaloid biosynthesis; morphine biosynthesis. With respect to regulation, moderate substrate inhibition. Not inhibited in vitro by acylcyclohexanediones. Its function is as follows. Non-heme dioxygenase involved in biosynthesis of morphinan-type benzylisoquinoline and opiate alkaloids natural products. Mediates the conversion of thebaine to neopinone. Also catalyzes, with lower efficiency, the 6-O-demethylation of oripavine to neomorphinone, which is converted spontaneously to morphinone. Supports dealkylation reactions such as O,O-demethylenation in the metabolism of protopine, benzo[c]phenanthridine, and rhoeadine alkaloids; cleaves a methylenedioxy bridge leaving two hydroxyl groups. Catalyzes the O-demethylation of methylenedioxy bridges on protopine alkaloids such as allocryptopine. No activity with (S)-reticuline, salutaridine, papaverine, (S)-corytuberine, (S)-scoulerine, pavine, noscapine or codeine. In Papaver somniferum (Opium poppy), this protein is Thebaine 6-O-demethylase.